The primary structure comprises 552 residues: CTP synthase (552 aa).

The segment at 1–265 (MTKYIFITGG…DEIVVRKLRL (265 aa)) is amidoligase domain. Serine 13 contributes to the CTP binding site. Serine 13 contacts UTP. Residues 14-19 (SLGKGI) and aspartate 71 each bind ATP. Mg(2+) is bound by residues aspartate 71 and glutamate 139. Residues 146 to 148 (DIE), 186 to 191 (KTKPTQ), and lysine 222 each bind CTP. Residues 186 to 191 (KTKPTQ) and lysine 222 contribute to the UTP site. Positions 290–541 (TVAMVGKYVN…VRAARARSEG (252 aa)) constitute a Glutamine amidotransferase type-1 domain. Residue glycine 351 coordinates L-glutamine. Residue cysteine 378 is the Nucleophile; for glutamine hydrolysis of the active site. Residues 379-382 (LGMQ), glutamate 402, and arginine 469 contribute to the L-glutamine site. Catalysis depends on residues histidine 514 and glutamate 516.

It belongs to the CTP synthase family. In terms of assembly, homotetramer.

It carries out the reaction UTP + L-glutamine + ATP + H2O = CTP + L-glutamate + ADP + phosphate + 2 H(+). The enzyme catalyses L-glutamine + H2O = L-glutamate + NH4(+). The catalysed reaction is UTP + NH4(+) + ATP = CTP + ADP + phosphate + 2 H(+). It functions in the pathway pyrimidine metabolism; CTP biosynthesis via de novo pathway; CTP from UDP: step 2/2. Its activity is regulated as follows. Allosterically activated by GTP, when glutamine is the substrate; GTP has no effect on the reaction when ammonia is the substrate. The allosteric effector GTP functions by stabilizing the protein conformation that binds the tetrahedral intermediate(s) formed during glutamine hydrolysis. Inhibited by the product CTP, via allosteric rather than competitive inhibition. In terms of biological role, catalyzes the ATP-dependent amination of UTP to CTP with either L-glutamine or ammonia as the source of nitrogen. Regulates intracellular CTP levels through interactions with the four ribonucleotide triphosphates. The polypeptide is CTP synthase (Methylococcus capsulatus (strain ATCC 33009 / NCIMB 11132 / Bath)).